A 269-amino-acid chain; its full sequence is Myelin protein zero-like protein 1 (269 aa).

Positions 1 to 35 (MAAPAGAGALIASPDRRRCLWSVLAAALGLLTYGV) are cleaved as a signal peptide. Residues 36–146 (SALEVYTPKE…VKNPPDIVVQ (111 aa)) enclose the Ig-like V-type domain. Topologically, residues 36 to 162 (SALEVYTPKE…YVVEKEILPA (127 aa)) are extracellular. 3 N-linked (GlcNAc...) asparagine glycosylation sites follow: asparagine 50, asparagine 64, and asparagine 130. A disulfide bond links cysteine 58 and cysteine 135. A helical transmembrane segment spans residues 163–183 (FPVWVVVGIVTAVVLGLTLLI). Topologically, residues 184 to 269 (TMILAVIYRR…SVVYADIRKN (86 aa)) are cytoplasmic. The interval 202-238 (GCNTSENVSPVKQVSRKSPSDTEGLVKSLPSGSHQGP) is disordered. Residues 203–213 (CNTSENVSPVK) show a composition bias toward polar residues. A phosphoserine mark is found at serine 206, serine 210, serine 219, and serine 221. An ITIM motif 1 motif is present at residues 239 to 244 (VIYAQL). The residue at position 241 (tyrosine 241) is a Phosphotyrosine. Serine 260 bears the Phosphoserine mark. An ITIM motif 2 motif is present at residues 261-266 (VVYADI). Phosphotyrosine is present on tyrosine 263.

This sequence belongs to the myelin P0 protein family. In terms of assembly, interacts with phosphorylated PTPN11/SHP-2. Post-translationally, phosphorylated on tyrosine residues upon stimulation with pervanadate and concanavalin-A (ConA). Phosphorylation at Tyr-241 and Tyr-263 is required for interaction with PTPN11/SHP-2. Dephosphorylated by PTPN11/SHP-2 (in vitro). N-glycosylated.

It localises to the membrane. Its function is as follows. Cell surface receptor, which is involved in signal transduction processes. Recruits PTPN11/SHP-2 to the cell membrane and is a putative substrate of PTPN11/SHP-2. Is a major receptor for concanavalin-A (ConA) and is involved in cellular signaling induced by ConA, which probably includes Src family tyrosine-protein kinases. May be involved in regulation of integrin-mediated cell motility. In Bos taurus (Bovine), this protein is Myelin protein zero-like protein 1 (MPZL1).